The chain runs to 1399 residues: Alpha-glucan water dikinase 1, chloroplastic (1399 aa).

Residues 1 to 75 (MSNSVVHNLL…GRPLSFVPRA (75 aa)) constitute a chloroplast transit peptide. V76 is modified (N-acetylvaline). The interval 265 to 306 (LLKKDNSNESPKSNGTSSSGREEKKKVSKQPERKKNYNTDKI) is disordered. Residues 272-283 (NESPKSNGTSSS) show a composition bias toward polar residues. Basic and acidic residues predominate over residues 284–306 (GREEKKKVSKQPERKKNYNTDKI). H1004 acts as the Tele-phosphohistidine intermediate in catalysis.

Belongs to the PEP-utilizing enzyme family. As to quaternary structure, homodimer. It depends on Mg(2+) as a cofactor.

It localises to the plastid. Its subcellular location is the chloroplast. The enzyme catalyses [(1-&gt;4)-alpha-D-glucosyl](n) + n ATP + n H2O = [(1-&gt;4)-6-phospho-alpha-D-glucosyl](n) + n AMP + n phosphate + 2n H(+). Its function is as follows. Mediates the incorporation of phosphate into starch-like alpha-glucan, mostly at the C-6 position of glucose units. Acts as an overall regulator of starch mobilization. Required for starch degradation, suggesting that the phosphate content of starch regulates its degradability. The protein is Alpha-glucan water dikinase 1, chloroplastic of Arabidopsis thaliana (Mouse-ear cress).